The primary structure comprises 160 residues: Secreted RxLR effector protein 83 (160 aa).

An N-terminal signal peptide occupies residues 1 to 21; that stretch reads MLVLLAATFFIYISRLTSTDA. Residues 27-30 carry the RxLR motif; the sequence is RGLR. N-linked (GlcNAc...) asparagine glycosylation is found at Asn-39 and Asn-131.

The protein belongs to the RxLR effector family.

The protein resides in the secreted. It localises to the host nucleus. It is found in the host cytoplasm. Functionally, secreted effector that completely suppresses the host cell death induced by cell death-inducing proteins. The protein is Secreted RxLR effector protein 83 of Plasmopara viticola (Downy mildew of grapevine).